A 428-amino-acid chain; its full sequence is Enolase (428 aa).

Position 163 (Gln163) interacts with (2R)-2-phosphoglycerate. Residue Glu205 is the Proton donor of the active site. Mg(2+) is bound by residues Asp242, Glu286, and Asp313. (2R)-2-phosphoglycerate-binding residues include Lys338, Arg367, Ser368, and Lys389. Residue Lys338 is the Proton acceptor of the active site.

It belongs to the enolase family. Mg(2+) is required as a cofactor.

It localises to the cytoplasm. The protein resides in the secreted. The protein localises to the cell surface. The enzyme catalyses (2R)-2-phosphoglycerate = phosphoenolpyruvate + H2O. It functions in the pathway carbohydrate degradation; glycolysis; pyruvate from D-glyceraldehyde 3-phosphate: step 4/5. In terms of biological role, catalyzes the reversible conversion of 2-phosphoglycerate (2-PG) into phosphoenolpyruvate (PEP). It is essential for the degradation of carbohydrates via glycolysis. The chain is Enolase from Bordetella bronchiseptica (strain ATCC BAA-588 / NCTC 13252 / RB50) (Alcaligenes bronchisepticus).